The sequence spans 220 residues: Glutathione S-transferase U26 (220 aa).

The GST N-terminal domain maps to 4-83 (DQVILLDYWP…YIDEVWSDAS (80 aa)). Glutathione contacts are provided by residues 14-15 (SM), 40-41 (VK), 54-55 (KI), and 67-68 (ES). In terms of domain architecture, GST C-terminal spans 89–210 (DPYQKSRARF…ADSDRIIEYV (122 aa)).

The protein belongs to the GST superfamily. Tau family.

The protein localises to the cytoplasm. It localises to the cytosol. It carries out the reaction RX + glutathione = an S-substituted glutathione + a halide anion + H(+). In vitro, possesses glutathione S-transferase activity toward 1-chloro-2,4-dinitrobenzene (CDNB). May be involved in the conjugation of reduced glutathione to a wide number of exogenous and endogenous hydrophobic electrophiles and have a detoxification role against certain herbicides. In Arabidopsis thaliana (Mouse-ear cress), this protein is Glutathione S-transferase U26 (GSTU26).